Here is a 455-residue protein sequence, read N- to C-terminus: Bifunctional protein GlmU (455 aa).

Positions 1–232 are pyrophosphorylase; that stretch reads MASTTGALIL…DPNLLGVNNP (232 aa). UDP-N-acetyl-alpha-D-glucosamine-binding positions include 10–13, lysine 24, glutamine 75, and 80–81; these read LAAG and GT. Aspartate 106 serves as a coordination point for Mg(2+). UDP-N-acetyl-alpha-D-glucosamine is bound by residues glycine 141, glutamate 155, asparagine 172, and asparagine 230. Asparagine 230 is a Mg(2+) binding site. The interval 233–253 is linker; sequence AELIRSEALLRTRLVIGHIEG. Residues 254–455 form an N-acetyltransferase region; that stretch reads GVLIHAPETV…QTNLPRKPKA (202 aa). Positions 336 and 354 each coordinate UDP-N-acetyl-alpha-D-glucosamine. Histidine 366 functions as the Proton acceptor in the catalytic mechanism. Residues tyrosine 369 and asparagine 380 each contribute to the UDP-N-acetyl-alpha-D-glucosamine site. Acetyl-CoA is bound by residues alanine 383, 389–390, serine 408, alanine 426, and arginine 443; that span reads NY.

It in the N-terminal section; belongs to the N-acetylglucosamine-1-phosphate uridyltransferase family. This sequence in the C-terminal section; belongs to the transferase hexapeptide repeat family. As to quaternary structure, homotrimer. Mg(2+) is required as a cofactor.

Its subcellular location is the cytoplasm. The enzyme catalyses alpha-D-glucosamine 1-phosphate + acetyl-CoA = N-acetyl-alpha-D-glucosamine 1-phosphate + CoA + H(+). The catalysed reaction is N-acetyl-alpha-D-glucosamine 1-phosphate + UTP + H(+) = UDP-N-acetyl-alpha-D-glucosamine + diphosphate. It functions in the pathway nucleotide-sugar biosynthesis; UDP-N-acetyl-alpha-D-glucosamine biosynthesis; N-acetyl-alpha-D-glucosamine 1-phosphate from alpha-D-glucosamine 6-phosphate (route II): step 2/2. It participates in nucleotide-sugar biosynthesis; UDP-N-acetyl-alpha-D-glucosamine biosynthesis; UDP-N-acetyl-alpha-D-glucosamine from N-acetyl-alpha-D-glucosamine 1-phosphate: step 1/1. Its pathway is bacterial outer membrane biogenesis; LPS lipid A biosynthesis. Catalyzes the last two sequential reactions in the de novo biosynthetic pathway for UDP-N-acetylglucosamine (UDP-GlcNAc). The C-terminal domain catalyzes the transfer of acetyl group from acetyl coenzyme A to glucosamine-1-phosphate (GlcN-1-P) to produce N-acetylglucosamine-1-phosphate (GlcNAc-1-P), which is converted into UDP-GlcNAc by the transfer of uridine 5-monophosphate (from uridine 5-triphosphate), a reaction catalyzed by the N-terminal domain. In Nitratidesulfovibrio vulgaris (strain ATCC 29579 / DSM 644 / CCUG 34227 / NCIMB 8303 / VKM B-1760 / Hildenborough) (Desulfovibrio vulgaris), this protein is Bifunctional protein GlmU.